The chain runs to 1361 residues: Zinc finger protein GLI4 (1361 aa).

The disordered stretch occupies residues 185–270 (SSFGHTPLLH…PQPPDHLTDL (86 aa)). 2 stretches are compositionally biased toward polar residues: residues 198-208 (TFASRQQGALT) and 227-241 (NKVS…TVNQ). 5 consecutive C2H2-type zinc fingers follow at residues 289–314 (TNCH…NNDH), 322–349 (FVCR…MRRH), 355–379 (HKCT…LRSH), 385–410 (YVCD…NRTH), and 416–441 (YICK…KTVH). Disordered stretches follow at residues 434 to 527 (RKHV…TNNI), 556 to 584 (STVS…GTAE), 647 to 720 (NERR…LPNL), 787 to 832 (NAGL…SMNS), 906 to 946 (QNRE…APGA), and 1134 to 1230 (DGLH…PKDN). Positions 475 to 502 (SGREHSDSVSRDQEHCLQTRTIKTEDNM) are enriched in basic and acidic residues. A compositionally biased stretch (low complexity) spans 506 to 522 (SSPGGQSSCSSEPSPYG). Positions 573–584 (QRIHSAETGTAE) are enriched in basic and acidic residues. The span at 653-670 (TSSTLSSAYTSRRSSGIS) shows a compositional bias: low complexity. Polar residues-rich tracts occupy residues 672-695 (YFSS…SSAD) and 710-720 (EASQHSGLPNL). Positions 805-821 (RASDPVRRTAGIDDKPL) are enriched in basic and acidic residues. Polar residues-rich tracts occupy residues 913–939 (QNLQ…NTPE) and 1142–1164 (YTVQ…SGQA). Over residues 1172 to 1183 (PRPPAAPHPPNR) the composition is skewed to pro residues.

It belongs to the GLI C2H2-type zinc-finger protein family.

Its subcellular location is the nucleus. In terms of biological role, has an essential role in the early embryonic patterning of mesoderm and neuroectoderm. The sequence is that of Zinc finger protein GLI4 (gli4) from Xenopus laevis (African clawed frog).